The following is a 259-amino-acid chain: MSIKVCIADDNRELVSLLDEYISSQPDMEVIGTAYNGQDCLQMLEEKRPDILLLDIIMPHLDGLAVLERIRAGFEHQPNVIMLTAFGQEDVTKKAVELGASYFILKPFDMENLAHHIRQVYGKTTPVVRKAAPAPQVRDNKPKNLDASITSIIHEIGVPAHIKGYLYLREAIAMVYHDIELLGSITKVLYPDIAKKYNTTASRVERAIRHAIEVAWSRGNLESISSLFGYTVSVSKAKPTNSEFIAMVADKLRLEHKAS.

One can recognise a Response regulatory domain in the interval 4-121 (KVCIADDNRE…NLAHHIRQVY (118 aa)). Positions 9, 10, and 55 each coordinate Ca(2+). Aspartate 55 is modified (4-aspartylphosphate). A DNA-binding region (H-T-H motif) is located at residues 191-210 (PDIAKKYNTTASRVERAIRH).

The cofactor is Ca(2+). Phosphorylated by KinA and KinB.

The protein resides in the cytoplasm. Its function is as follows. May play the central regulatory role in sporulation. It may be an element of the effector pathway responsible for the activation of sporulation genes in response to nutritional stress. Spo0A may act in concert with Spo0H (a sigma factor) to control the expression of some genes that are critical to the sporulation process. Repressor of abrB, activator of the spoIIa operon. Binds the DNA sequence 5'-TGNCGAA-3' (0A box). This Geobacillus stearothermophilus (Bacillus stearothermophilus) protein is Stage 0 sporulation protein A (spo0A).